The chain runs to 423 residues: Pleckstrin homology domain-containing family O member 1 (423 aa).

Disordered regions lie at residues Met-1–Pro-21, Arg-81–Arg-100, and Leu-217–Lys-277. Residues Ala-7 to Gln-20 are compositionally biased toward polar residues. Residues Gln-20–Thr-131 form the PH domain. Basic residues predominate over residues Ser-83 to Ser-92. A compositionally biased stretch (basic and acidic residues) spans Arg-222 to Asp-259.

In terms of processing, C-terminal fragments could be released during apoptosis via caspase-3-dependent cleavage.

Its subcellular location is the membrane. The protein localises to the nucleus. The protein resides in the cytoplasm. Plays a role in the regulation of the actin cytoskeleton through its interactions with actin capping protein (CP). The polypeptide is Pleckstrin homology domain-containing family O member 1 (PLEKHO1) (Gallus gallus (Chicken)).